Reading from the N-terminus, the 104-residue chain is Transcription elongation factor A protein-like 9 (104 aa).

Positions 1 to 27 (MKSCQKMEGKPENESEPKHEEEPKPEE) are enriched in basic and acidic residues. The tract at residues 1–44 (MKSCQKMEGKPENESEPKHEEEPKPEEKPEEEEKLEEEAKAKGT) is disordered.

This sequence belongs to the TFS-II family. TFA subfamily.

It localises to the nucleus. May be involved in transcriptional regulation. The chain is Transcription elongation factor A protein-like 9 from Homo sapiens (Human).